A 673-amino-acid chain; its full sequence is Outer spore wall assembly protein SHE10 (673 aa).

The signal sequence occupies residues 1–24 (MRRVRGVGNLLVTILVVLIGFKQA). A coiled-coil region spans residues 503–568 (ILRSQANIAF…LALEQGQGQE (66 aa)). Disordered stretches follow at residues 530 to 551 (LEQE…AENE) and 587 to 673 (TPLG…SQAN). Acidic residues-rich tracts occupy residues 593 to 605 (DNTD…DDAD) and 612 to 629 (GDSE…EEDA). Residues 617-647 (NFYDSYEGDEEDASRELERLERESAERETLD) adopt a coiled-coil conformation. Basic and acidic residues predominate over residues 630–673 (SRELERLERESAERETLDRLELGQRQKLQEEQHRDELHHSSQAN).

The protein belongs to the SHE10 family. As to quaternary structure, component of the mitochondria-localized RNase mitochondrial RNA-processing (RNase MRP) composed of one single RNA encoded by the NME1 gene and at least 31 proteins. Absent in the nucleus-localized RNase MRP (NuMRP).

The protein resides in the mitochondrion. Functionally, involved in spore wall assembly. May be a component of the mitochondrial RNase MRP (MtMRP), a ribonucleoprotein endoribonuclease involved in the cleaving RNA transcripts to generate primers for DNA replication in mitochondria. The polypeptide is Outer spore wall assembly protein SHE10 (Lachancea thermotolerans (strain ATCC 56472 / CBS 6340 / NRRL Y-8284) (Yeast)).